The chain runs to 92 residues: MNWRNLVSDDITSEAQTIAVGQLRAFIERIERLEEEKKTIGDDIKEVYAELKGSGFDSKVVRTIIRLRKKEDHERQEEEAMLQLYMDALGMS.

Belongs to the UPF0335 family.

The sequence is that of UPF0335 protein BMEI0289 from Brucella melitensis biotype 1 (strain ATCC 23456 / CCUG 17765 / NCTC 10094 / 16M).